The sequence spans 468 residues: 3-isopropylmalate dehydratase large subunit (468 aa).

[4Fe-4S] cluster-binding residues include Cys-347, Cys-407, and Cys-410.

It belongs to the aconitase/IPM isomerase family. LeuC type 1 subfamily. In terms of assembly, heterodimer of LeuC and LeuD. Requires [4Fe-4S] cluster as cofactor.

The catalysed reaction is (2R,3S)-3-isopropylmalate = (2S)-2-isopropylmalate. Its pathway is amino-acid biosynthesis; L-leucine biosynthesis; L-leucine from 3-methyl-2-oxobutanoate: step 2/4. Its function is as follows. Catalyzes the isomerization between 2-isopropylmalate and 3-isopropylmalate, via the formation of 2-isopropylmaleate. The sequence is that of 3-isopropylmalate dehydratase large subunit from Campylobacter jejuni subsp. jejuni serotype O:6 (strain 81116 / NCTC 11828).